Here is a 64-residue protein sequence, read N- to C-terminus: MEIQVVDNNVEKAIRVLKRKLQQEGLFREMKQRKFYEKPSVKRKRKEKEAQRRLRKKMRMMKKA.

The disordered stretch occupies residues glutamate 37–alanine 64. The segment covering arginine 53–alanine 64 has biased composition (basic residues).

Belongs to the bacterial ribosomal protein bS21 family.

The sequence is that of Small ribosomal subunit protein bS21 from Syntrophotalea carbinolica (strain DSM 2380 / NBRC 103641 / GraBd1) (Pelobacter carbinolicus).